The chain runs to 139 residues: 3-hydroxyacyl-[acyl-carrier-protein] dehydratase FabZ (139 aa).

The active site involves His-46.

This sequence belongs to the thioester dehydratase family. FabZ subfamily.

It is found in the cytoplasm. The catalysed reaction is a (3R)-hydroxyacyl-[ACP] = a (2E)-enoyl-[ACP] + H2O. In terms of biological role, involved in unsaturated fatty acids biosynthesis. Catalyzes the dehydration of short chain beta-hydroxyacyl-ACPs and long chain saturated and unsaturated beta-hydroxyacyl-ACPs. The polypeptide is 3-hydroxyacyl-[acyl-carrier-protein] dehydratase FabZ (Streptococcus pyogenes serotype M1).